The chain runs to 331 residues: Vacuolar protein sorting-associated protein 26B (331 aa).

The interval 310–331 (AAQRYEGSNPEPTSAQAKEETD) is disordered.

This sequence belongs to the VPS26 family. Component of the heterotrimeric retromer cargo-selective complex (CSC) which is believed to associate with variable sorting nexins to form functionally distinct retromer complex variants.

The protein localises to the cytoplasm. It is found in the membrane. Its subcellular location is the endosome. Acts as a component of the retromer cargo-selective complex (CSC). The CSC is believed to be the core functional component of retromer or respective retromer complex variants acting to prevent missorting of selected transmembrane cargo proteins into the lysosomal degradation pathway. Retromer mediates retrograde transport of cargo proteins from endosomes to the trans-Golgi network (TGN). This Danio rerio (Zebrafish) protein is Vacuolar protein sorting-associated protein 26B (vps26b).